A 309-amino-acid polypeptide reads, in one-letter code: E3 ubiquitin-protein ligase SINAT5 (309 aa).

An RING-type zinc finger spans residues 46–82; it reads CPVCTNSMYPPIHQCHNGHTLCSTCKSRVHNRCPTCR. The tract at residues 96 to 289 is SBD; sequence VAESLELPCK…KELKLRVTGR (194 aa). The SIAH-type zinc-finger motif lies at 99–159; sequence SLELPCKYYN…LVAHLRDDHK (61 aa). Cys104, Cys111, His123, Cys127, Cys134, Cys141, His153, and His158 together coordinate Zn(2+).

This sequence belongs to the SINA (Seven in absentia) family. Homodimer; homodimerization is essential for its function. Interacts with UBC28 and NAC021/NAC022. Interacts with SINAT6. Interacts with ATG6 and TRAF1A. Interacts with WAV3. Interacts with FREE1. As to expression, expressed at low level in the vascular tissue of mature roots. Expressed in lateral roots and in elongation zone of the main root upon stimulation by auxin. Colocalizes with NAC021/NAC022.

The protein localises to the nucleus. It localises to the cytoplasm. The catalysed reaction is S-ubiquitinyl-[E2 ubiquitin-conjugating enzyme]-L-cysteine + [acceptor protein]-L-lysine = [E2 ubiquitin-conjugating enzyme]-L-cysteine + N(6)-ubiquitinyl-[acceptor protein]-L-lysine.. Its pathway is protein modification; protein ubiquitination. Its function is as follows. E3 ubiquitin-protein ligase that mediates ubiquitination and subsequent proteasomal degradation of target proteins. E3 ubiquitin ligases accept ubiquitin from an E2 ubiquitin-conjugating enzyme in the form of a thioester and then directly transfers the ubiquitin to targeted substrates. Mediates the ubiquitination and proteasomal-dependent degradation of NAC021/NAC022, a transcription activator that functions downstream of the auxin signals, thereby acting as a down-regulator of auxin signals. Involved in the formation of lateral roots. Is antagonist to SINAT1, SINAT2, SINAT3 and SINAT4 by suppressing FREE1 ubiquitination and degradation mediated by SINAT1, SINAT2, SINAT3 and SINAT4, and promoting FREE1 accumulation. This Arabidopsis thaliana (Mouse-ear cress) protein is E3 ubiquitin-protein ligase SINAT5.